We begin with the raw amino-acid sequence, 426 residues long: Serine--tRNA ligase (426 aa).

229–231 contacts L-serine; sequence TAE. ATP contacts are provided by residues 260–262 and V276; that span reads RTE. An L-serine-binding site is contributed by E283. 350 to 353 lines the ATP pocket; the sequence is EVTS. Position 386 (T386) interacts with L-serine.

Belongs to the class-II aminoacyl-tRNA synthetase family. Type-1 seryl-tRNA synthetase subfamily. Homodimer. The tRNA molecule binds across the dimer.

The protein resides in the cytoplasm. It carries out the reaction tRNA(Ser) + L-serine + ATP = L-seryl-tRNA(Ser) + AMP + diphosphate + H(+). It catalyses the reaction tRNA(Sec) + L-serine + ATP = L-seryl-tRNA(Sec) + AMP + diphosphate + H(+). The protein operates within aminoacyl-tRNA biosynthesis; selenocysteinyl-tRNA(Sec) biosynthesis; L-seryl-tRNA(Sec) from L-serine and tRNA(Sec): step 1/1. Catalyzes the attachment of serine to tRNA(Ser). Is also able to aminoacylate tRNA(Sec) with serine, to form the misacylated tRNA L-seryl-tRNA(Sec), which will be further converted into selenocysteinyl-tRNA(Sec). The protein is Serine--tRNA ligase of Rhodopirellula baltica (strain DSM 10527 / NCIMB 13988 / SH1).